The primary structure comprises 410 residues: Arginine deiminase (410 aa).

The active-site Amidino-cysteine intermediate is the Cys400.

The protein belongs to the arginine deiminase family.

It localises to the cytoplasm. The enzyme catalyses L-arginine + H2O = L-citrulline + NH4(+). Its pathway is amino-acid degradation; L-arginine degradation via ADI pathway; carbamoyl phosphate from L-arginine: step 1/2. This Streptococcus agalactiae serotype III (strain NEM316) protein is Arginine deiminase.